The chain runs to 418 residues: Transcription termination factor Rho (418 aa).

The Rho RNA-BD domain occupies S48–A123. ATP is bound by residues G169–A174, K181–V186, and R212.

The protein belongs to the Rho family. In terms of assembly, homohexamer. The homohexamer assembles into an open ring structure.

Facilitates transcription termination by a mechanism that involves Rho binding to the nascent RNA, activation of Rho's RNA-dependent ATPase activity, and release of the mRNA from the DNA template. The chain is Transcription termination factor Rho from Chromobacterium violaceum (strain ATCC 12472 / DSM 30191 / JCM 1249 / CCUG 213 / NBRC 12614 / NCIMB 9131 / NCTC 9757 / MK).